A 656-amino-acid chain; its full sequence is Kinesin-related protein SMY1 (656 aa).

Positions 27-364 (HIEVILRAIP…LEFGDSIRQI (338 aa)) constitute a Kinesin motor domain. Position 114–121 (114–121 (GPSFSGKS)) interacts with ATP. Thr-583 is modified (phosphothreonine).

It belongs to the TRAFAC class myosin-kinesin ATPase superfamily. Kinesin family.

It is found in the cytoplasm. The protein resides in the cytoskeleton. In terms of biological role, possible microtubule-based motor that can interact or substitute with myosin 2 (MYO2). The protein is Kinesin-related protein SMY1 (SMY1) of Saccharomyces cerevisiae (strain ATCC 204508 / S288c) (Baker's yeast).